The sequence spans 315 residues: D-erythronate dehydrogenase (315 aa).

3 residues coordinate NAD(+): serine 119, tyrosine 143, and lysine 147. Residue tyrosine 143 is the Proton acceptor of the active site.

It belongs to the NAD(P)-dependent epimerase/dehydratase family.

The enzyme catalyses D-erythronate + NAD(+) = 2-dehydro-D-erythronate + NADH + H(+). Catalyzes oxidation of D-erythronate to 2-oxo-tetronate. Can use either NAD(+) or NADP(+) as cosubstrate, with a preference for NAD(+). The chain is D-erythronate dehydrogenase from Haemophilus influenzae (strain ATCC 51907 / DSM 11121 / KW20 / Rd).